The sequence spans 398 residues: 1-deoxy-D-xylulose 5-phosphate reductoisomerase (398 aa).

8 residues coordinate NADPH: T10, G11, S12, I13, G36, K37, N38, and N124. K125 contributes to the 1-deoxy-D-xylulose 5-phosphate binding site. E126 is an NADPH binding site. D150 is a binding site for Mn(2+). The 1-deoxy-D-xylulose 5-phosphate site is built by S151, E152, S186, and H209. Mn(2+) is bound at residue E152. G215 serves as a coordination point for NADPH. Positions 222, 227, 228, and 231 each coordinate 1-deoxy-D-xylulose 5-phosphate. E231 contributes to the Mn(2+) binding site.

Belongs to the DXR family. Homodimer. Mg(2+) serves as cofactor. It depends on Mn(2+) as a cofactor.

The catalysed reaction is 2-C-methyl-D-erythritol 4-phosphate + NADP(+) = 1-deoxy-D-xylulose 5-phosphate + NADPH + H(+). Its pathway is isoprenoid biosynthesis; isopentenyl diphosphate biosynthesis via DXP pathway; isopentenyl diphosphate from 1-deoxy-D-xylulose 5-phosphate: step 1/6. Functionally, catalyzes the NADPH-dependent rearrangement and reduction of 1-deoxy-D-xylulose-5-phosphate (DXP) to 2-C-methyl-D-erythritol 4-phosphate (MEP). This is 1-deoxy-D-xylulose 5-phosphate reductoisomerase from Salmonella paratyphi A (strain ATCC 9150 / SARB42).